Reading from the N-terminus, the 537-residue chain is Chaperonin GroEL (537 aa).

ATP-binding positions include threonine 29 to proline 32, aspartate 86 to threonine 90, glycine 413, asparagine 477 to alanine 479, and aspartate 493.

Belongs to the chaperonin (HSP60) family. In terms of assembly, forms a cylinder of 14 subunits composed of two heptameric rings stacked back-to-back. Interacts with the co-chaperonin GroES.

Its subcellular location is the cytoplasm. The enzyme catalyses ATP + H2O + a folded polypeptide = ADP + phosphate + an unfolded polypeptide.. Its function is as follows. Together with its co-chaperonin GroES, plays an essential role in assisting protein folding. The GroEL-GroES system forms a nano-cage that allows encapsulation of the non-native substrate proteins and provides a physical environment optimized to promote and accelerate protein folding. This chain is Chaperonin GroEL, found in Bifidobacterium animalis subsp. lactis (strain AD011).